Here is a 57-residue protein sequence, read N- to C-terminus: Large ribosomal subunit protein bL33 (57 aa).

The protein belongs to the bacterial ribosomal protein bL33 family.

The polypeptide is Large ribosomal subunit protein bL33 (Shewanella sp. (strain MR-4)).